The sequence spans 105 residues: Iron-sulfur cluster assembly protein CyaY (105 aa).

The protein belongs to the frataxin family.

Its function is as follows. Involved in iron-sulfur (Fe-S) cluster assembly. May act as a regulator of Fe-S biogenesis. This chain is Iron-sulfur cluster assembly protein CyaY, found in Chromobacterium violaceum (strain ATCC 12472 / DSM 30191 / JCM 1249 / CCUG 213 / NBRC 12614 / NCIMB 9131 / NCTC 9757 / MK).